A 160-amino-acid polypeptide reads, in one-letter code: Cyclic pyranopterin monophosphate synthase (160 aa).

Substrate is bound by residues Met-75–His-77 and Met-115–Glu-116. Asp-130 is a catalytic residue.

This sequence belongs to the MoaC family. As to quaternary structure, homohexamer; trimer of dimers.

The enzyme catalyses (8S)-3',8-cyclo-7,8-dihydroguanosine 5'-triphosphate = cyclic pyranopterin phosphate + diphosphate. The protein operates within cofactor biosynthesis; molybdopterin biosynthesis. Its function is as follows. Catalyzes the conversion of (8S)-3',8-cyclo-7,8-dihydroguanosine 5'-triphosphate to cyclic pyranopterin monophosphate (cPMP). The polypeptide is Cyclic pyranopterin monophosphate synthase (Lysinibacillus sphaericus (strain C3-41)).